Consider the following 330-residue polypeptide: Biotin synthase 2 (330 aa).

Positions 48-278 (MCGDGFDMCS…QAAIRLAGGR (231 aa)) constitute a Radical SAM core domain. 3 residues coordinate [4Fe-4S] cluster: cysteine 66, cysteine 70, and cysteine 73. Residues serine 111, cysteine 143, cysteine 203, and arginine 273 each coordinate [2Fe-2S] cluster.

Belongs to the radical SAM superfamily. Biotin synthase family. Homodimer. Requires [4Fe-4S] cluster as cofactor. [2Fe-2S] cluster serves as cofactor.

The catalysed reaction is (4R,5S)-dethiobiotin + (sulfur carrier)-SH + 2 reduced [2Fe-2S]-[ferredoxin] + 2 S-adenosyl-L-methionine = (sulfur carrier)-H + biotin + 2 5'-deoxyadenosine + 2 L-methionine + 2 oxidized [2Fe-2S]-[ferredoxin]. The protein operates within cofactor biosynthesis; biotin biosynthesis; biotin from 7,8-diaminononanoate: step 2/2. Its function is as follows. Catalyzes the conversion of dethiobiotin (DTB) to biotin by the insertion of a sulfur atom into dethiobiotin via a radical-based mechanism. This is Biotin synthase 2 from Corynebacterium diphtheriae (strain ATCC 700971 / NCTC 13129 / Biotype gravis).